The sequence spans 452 residues: Keratin, type I cytoskeletal 42 (452 aa).

The interval 4 to 93 is head; that stretch reads TTSVRQFSTS…GVSDALLGGS (90 aa). Residues 94 to 129 form a coil 1A region; it reads EKETMQNLNDRLATYLDRVRALEEANADLEVKIREW. Residues 94–405 form the IF rod domain; the sequence is EKETMQNLND…RLLEGEDAHL (312 aa). Positions 130–147 are linker 1; the sequence is YKKQGPGPARDYSPYFKT. The segment at 148 to 239 is coil 1B; that stretch reads IEDLRNKILA…KNHEEEMNAL (92 aa). Residues 240–262 are linker 12; it reads RGQVGGDVNVEMDAAPGVDLSRI. The tract at residues 263-401 is coil 2; the sequence is LNEMRDQYEK…ATYRRLLEGE (139 aa). Residues 402–452 are tail; it reads DAHLATQYSSSLASQPSREGMVTSRQVRTIVEEVQDGKVVSSREQVHRSTH.

This sequence belongs to the intermediate filament family. Heterodimer of a type I and a type II keratin. Colocalizes with KRT8/KRT18 filament network. In terms of tissue distribution, expressed in nail matrix and nail bed epithelium (at protein level). Also expressed in tongue and digits with weak expression in vibrissae and in both filiform and fungiform papillae of oral mucosa.

It localises to the cytoplasm. This Mus musculus (Mouse) protein is Keratin, type I cytoskeletal 42.